The chain runs to 236 residues: 2-C-methyl-D-erythritol 4-phosphate cytidylyltransferase (236 aa).

It belongs to the IspD/TarI cytidylyltransferase family. IspD subfamily.

It catalyses the reaction 2-C-methyl-D-erythritol 4-phosphate + CTP + H(+) = 4-CDP-2-C-methyl-D-erythritol + diphosphate. It participates in isoprenoid biosynthesis; isopentenyl diphosphate biosynthesis via DXP pathway; isopentenyl diphosphate from 1-deoxy-D-xylulose 5-phosphate: step 2/6. Functionally, catalyzes the formation of 4-diphosphocytidyl-2-C-methyl-D-erythritol from CTP and 2-C-methyl-D-erythritol 4-phosphate (MEP). The sequence is that of 2-C-methyl-D-erythritol 4-phosphate cytidylyltransferase from Azoarcus sp. (strain BH72).